Consider the following 285-residue polypeptide: NADPH-dependent 7-cyano-7-deazaguanine reductase (285 aa).

Valine 80–serine 82 contributes to the substrate binding site. Serine 82–lysine 83 is an NADPH binding site. Catalysis depends on cysteine 191, which acts as the Thioimide intermediate. Aspartate 198 (proton donor) is an active-site residue. Histidine 231–glutamate 232 lines the substrate pocket. Arginine 260–glycine 261 is a binding site for NADPH.

It belongs to the GTP cyclohydrolase I family. QueF type 2 subfamily. As to quaternary structure, homodimer.

Its subcellular location is the cytoplasm. The enzyme catalyses 7-aminomethyl-7-carbaguanine + 2 NADP(+) = 7-cyano-7-deazaguanine + 2 NADPH + 3 H(+). Its pathway is tRNA modification; tRNA-queuosine biosynthesis. Functionally, catalyzes the NADPH-dependent reduction of 7-cyano-7-deazaguanine (preQ0) to 7-aminomethyl-7-deazaguanine (preQ1). The chain is NADPH-dependent 7-cyano-7-deazaguanine reductase from Psychrobacter arcticus (strain DSM 17307 / VKM B-2377 / 273-4).